A 78-amino-acid chain; its full sequence is Large ribosomal subunit protein bL28B (78 aa).

The protein belongs to the bacterial ribosomal protein bL28 family.

The polypeptide is Large ribosomal subunit protein bL28B (rpmB2) (Streptomyces coelicolor (strain ATCC BAA-471 / A3(2) / M145)).